We begin with the raw amino-acid sequence, 124 residues long: Vitelline membrane protein Vm32E (124 aa).

A signal peptide spans 1–19 (MKTVAFLAVVVLFAAFACA). A VM domain is found at 42 to 81 (SVPAPPCPKNYLFSCQPNLVPAPCAQQAAPAAYGSAGAYT).

The protein belongs to the vitelline membrane family.

The protein localises to the secreted. Its function is as follows. Major early eggshell protein. In Drosophila pseudoobscura pseudoobscura (Fruit fly), this protein is Vitelline membrane protein Vm32E.